A 109-amino-acid chain; its full sequence is Transcription initiation factor IIA subunit 2 (109 aa).

It belongs to the TFIIA subunit 2 family. As to quaternary structure, TFIIA is a heterodimer composed of the large toa1 and the small toa2 subunits.

The protein localises to the nucleus. Its subcellular location is the cytoplasm. In terms of biological role, TFIIA is a component of the transcription machinery of RNA polymerase II and plays an important role in transcriptional activation. TFIIA in a complex with tbp mediates transcriptional activity. This chain is Transcription initiation factor IIA subunit 2 (toa2), found in Schizosaccharomyces pombe (strain 972 / ATCC 24843) (Fission yeast).